We begin with the raw amino-acid sequence, 299 residues long: Mitochondrial 2-oxodicarboxylate carrier (299 aa).

Solcar repeat units follow at residues 11-100 (REAS…YKKL), 107-196 (SPAL…VKNM), and 205-294 (LEFW…TYSW). The next 6 membrane-spanning stretches (helical) occupy residues 17–37 (IVAGGSAGLVEICLMHPLDVV), 70–89 (FGFYKGILPPILAETPKRAV), 113–133 (AIAGLGSGLTEAIVVNPFEVV), 167–187 (GLNKGLTATLGRHGVFNMVYF), 205–225 (LEFWRKFGIGLLSGTIASVIN), and 277–297 (LGPGGAVMLLVYEYTYSWLQE).

It belongs to the mitochondrial carrier (TC 2.A.29) family. Expressed in placenta, gall bladder and colon.

It localises to the mitochondrion inner membrane. The catalysed reaction is 2-oxoadipate(in) + 2-oxoglutarate(out) = 2-oxoadipate(out) + 2-oxoglutarate(in). It catalyses the reaction hexanedioate(in) + 2-oxoglutarate(out) = hexanedioate(out) + 2-oxoglutarate(in). The enzyme catalyses L-2-aminoadipate(in) + 2-oxoglutarate(out) = L-2-aminoadipate(out) + 2-oxoglutarate(in). It carries out the reaction glutarate(in) + 2-oxoglutarate(out) = glutarate(out) + 2-oxoglutarate(in). The catalysed reaction is 2-oxoheptanedioate(in) + 2-oxoglutarate(out) = 2-oxoheptanedioate(out) + 2-oxoglutarate(in). It catalyses the reaction heptanedioate(in) + 2-oxoglutarate(out) = heptanedioate(out) + 2-oxoglutarate(in). The enzyme catalyses citrate(in) + 2-oxoglutarate(out) = citrate(out) + 2-oxoglutarate(in). In terms of biological role, transports dicarboxylates across the inner membranes of mitochondria by a counter-exchange mechanism. Can transport 2-oxoadipate (2-oxohexanedioate), 2-oxoglutarate, adipate (hexanedioate), glutarate, and to a lesser extent, pimelate (heptanedioate), 2-oxopimelate (2-oxoheptanedioate), 2-aminoadipate (2-aminohexanedioate), oxaloacetate, and citrate. Plays a central role in catabolism of lysine, hydroxylysine, and tryptophan, by transporting common metabolite intermediates (such as 2-oxoadipate) into the mitochondria, where it is converted into acetyl-CoA and can enter the citric acid (TCA) cycle. This Homo sapiens (Human) protein is Mitochondrial 2-oxodicarboxylate carrier (SLC25A21).